We begin with the raw amino-acid sequence, 395 residues long: Elongation factor Tu (395 aa).

In terms of domain architecture, tr-type G spans 10-205; that stretch reads KPHVNIGTIG…VDSYIPLPPR (196 aa). The tract at residues 19–26 is G1; the sequence is GHVDHGKT. 19-26 is a binding site for GTP; that stretch reads GHVDHGKT. Threonine 26 lines the Mg(2+) pocket. A G2 region spans residues 60-64; sequence GITIN. The segment at 81–84 is G3; that stretch reads DCPG. GTP contacts are provided by residues 81–85 and 136–139; these read DCPGH and NKVD. The segment at 136 to 139 is G4; the sequence is NKVD. Residues 174–176 form a G5 region; that stretch reads SAT.

It belongs to the TRAFAC class translation factor GTPase superfamily. Classic translation factor GTPase family. EF-Tu/EF-1A subfamily. In terms of assembly, monomer.

Its subcellular location is the cytoplasm. The enzyme catalyses GTP + H2O = GDP + phosphate + H(+). Functionally, GTP hydrolase that promotes the GTP-dependent binding of aminoacyl-tRNA to the A-site of ribosomes during protein biosynthesis. The protein is Elongation factor Tu of Terrimonas ferruginea (Flavobacterium ferrugineum).